Consider the following 67-residue polypeptide: MSRFWNNVVKFPRFLVSVILGLILTIISPFFVLFRKPSTSFFFIISFTGLLVVLTAIIKKMLNIECC.

This sequence belongs to the ycf33 family.

Its subcellular location is the plastid. It is found in the chloroplast. This is an uncharacterized protein from Porphyra purpurea (Red seaweed).